A 67-amino-acid chain; its full sequence is Toxin Cex8 (67 aa).

A signal peptide is located at residue A1. The region spanning 2–65 is the LCN-type CS-alpha/beta domain; the sequence is KEGYLVNIYT…SYPYPEKSCG (64 aa). Disulfide bonds link C13-C64, C17-C40, C26-C45, and C30-C47. C64 carries the cysteine amide modification. The propeptide occupies 65 to 67; the sequence is GRK.

The protein belongs to the long (4 C-C) scorpion toxin superfamily. Sodium channel inhibitor family. Beta subfamily. In terms of tissue distribution, expressed by the venom gland.

The protein localises to the secreted. In terms of biological role, beta toxins bind voltage-independently at site-4 of sodium channels (Nav) and shift the voltage of activation toward more negative potentials thereby affecting sodium channel activation and promoting spontaneous and repetitive firing. The polypeptide is Toxin Cex8 (Centruroides exilicauda (Bark scorpion)).